The chain runs to 115 residues: Phosphoribosyl-AMP cyclohydrolase (115 aa).

Asp80 serves as a coordination point for Mg(2+). Cys81 provides a ligand contact to Zn(2+). Mg(2+) is bound by residues Asp82 and Asp84. Positions 97 and 104 each coordinate Zn(2+).

It belongs to the PRA-CH family. Homodimer. Requires Mg(2+) as cofactor. Zn(2+) serves as cofactor.

The protein localises to the cytoplasm. It catalyses the reaction 1-(5-phospho-beta-D-ribosyl)-5'-AMP + H2O = 1-(5-phospho-beta-D-ribosyl)-5-[(5-phospho-beta-D-ribosylamino)methylideneamino]imidazole-4-carboxamide. The protein operates within amino-acid biosynthesis; L-histidine biosynthesis; L-histidine from 5-phospho-alpha-D-ribose 1-diphosphate: step 3/9. Catalyzes the hydrolysis of the adenine ring of phosphoribosyl-AMP. The polypeptide is Phosphoribosyl-AMP cyclohydrolase (Rhodococcus erythropolis (strain PR4 / NBRC 100887)).